The chain runs to 201 residues: Probable nicotinate-nucleotide adenylyltransferase (201 aa).

This sequence belongs to the NadD family.

It carries out the reaction nicotinate beta-D-ribonucleotide + ATP + H(+) = deamido-NAD(+) + diphosphate. It participates in cofactor biosynthesis; NAD(+) biosynthesis; deamido-NAD(+) from nicotinate D-ribonucleotide: step 1/1. Functionally, catalyzes the reversible adenylation of nicotinate mononucleotide (NaMN) to nicotinic acid adenine dinucleotide (NaAD). The protein is Probable nicotinate-nucleotide adenylyltransferase of Neisseria gonorrhoeae (strain ATCC 700825 / FA 1090).